Here is a 228-residue protein sequence, read N- to C-terminus: Probable septum site-determining protein MinC (228 aa).

Belongs to the MinC family. In terms of assembly, interacts with MinD and FtsZ.

Its function is as follows. Cell division inhibitor that blocks the formation of polar Z ring septums. Rapidly oscillates between the poles of the cell to destabilize FtsZ filaments that have formed before they mature into polar Z rings. Prevents FtsZ polymerization. This chain is Probable septum site-determining protein MinC, found in Bacillus anthracis (strain A0248).